The following is a 555-amino-acid chain: Protein NRT1/ PTR FAMILY 5.4 (555 aa).

2 consecutive transmembrane segments (helical) span residues 18-38 (AALF…GLAS) and 62-82 (WIGV…SILG). Residue Thr86 is modified to Phosphothreonine. Transmembrane regions (helical) follow at residues 87–107 (VLLT…SVTV), 116–136 (VFFM…PCVM), 159–179 (NYWY…LIFI), 187–207 (LGFS…LIGI), 311–331 (IPIW…NTFF), 348–368 (IPPA…IPLY), 392–412 (IGVG…VEAK), 435–455 (LWLL…IVGM), 470–490 (IGAA…TGII), and 516–536 (YYYW…LFIA).

This sequence belongs to the major facilitator superfamily. Proton-dependent oligopeptide transporter (POT/PTR) (TC 2.A.17) family. As to expression, expressed in roots and flowers.

Its subcellular location is the membrane. The sequence is that of Protein NRT1/ PTR FAMILY 5.4 (NPF5.4) from Arabidopsis thaliana (Mouse-ear cress).